A 268-amino-acid chain; its full sequence is Interferon alpha/beta receptor 2 (268 aa).

Positions 1–16 are cleaved as a signal peptide; that stretch reads MGPWTLLLLHLPLVVS. Residues 17 to 223 are Extracellular-facing; the sequence is MLPAPTNVSI…TSPTAANTVP (207 aa). Fibronectin type-III domains are found at residues 18-114 and 115-217; these read LPAP…LTDT and LLGP…TSPT. 2 cysteine pairs are disulfide-bonded: cysteine 65–cysteine 74 and cysteine 191–cysteine 211. The helical transmembrane segment at 224-244 threads the bilayer; sequence VVLSVLCAFSLLVVLLCGIVV. The Cytoplasmic portion of the chain corresponds to 245–268; sequence YSGRLLCMHKPLPKTLSSVPLCGG.

This sequence belongs to the type II cytokine receptor family. In terms of assembly, heterodimer with IFNAR1; forming the receptor for type I interferon.

The protein localises to the cell membrane. Its subcellular location is the cytoplasm. Its function is as follows. Together with IFNAR1, forms the heterodimeric receptor for type I interferons (including interferons alpha, beta, epsilon, omega and kappa). Type I interferon binding activates the JAK-STAT signaling cascade, resulting in transcriptional activation or repression of interferon-regulated genes that encode the effectors of the interferon response. Mechanistically, type I interferon-binding brings the IFNAR1 and IFNAR2 subunits into close proximity with one another, driving their associated Janus kinases (JAKs) (TYK2 bound to IFNAR1 and JAK1 bound to IFNAR2) to cross-phosphorylate one another. The activated kinases phosphorylate specific tyrosine residues on the intracellular domains of IFNAR1 and IFNAR2, forming docking sites for the STAT transcription factors (STAT1, STAT2 and STAT). STAT proteins are then phosphorylated by the JAKs, promoting their translocation into the nucleus to regulate expression of interferon-regulated genes. This is Interferon alpha/beta receptor 2 from Oncorhynchus mykiss (Rainbow trout).